We begin with the raw amino-acid sequence, 375 residues long: Anhydro-N-acetylmuramic acid kinase (375 aa).

12-19 (GTSMDGVD) lines the ATP pocket.

The protein belongs to the anhydro-N-acetylmuramic acid kinase family.

It carries out the reaction 1,6-anhydro-N-acetyl-beta-muramate + ATP + H2O = N-acetyl-D-muramate 6-phosphate + ADP + H(+). The protein operates within amino-sugar metabolism; 1,6-anhydro-N-acetylmuramate degradation. It participates in cell wall biogenesis; peptidoglycan recycling. Its function is as follows. Catalyzes the specific phosphorylation of 1,6-anhydro-N-acetylmuramic acid (anhMurNAc) with the simultaneous cleavage of the 1,6-anhydro ring, generating MurNAc-6-P. Is required for the utilization of anhMurNAc either imported from the medium or derived from its own cell wall murein, and thus plays a role in cell wall recycling. This chain is Anhydro-N-acetylmuramic acid kinase, found in Photobacterium profundum (strain SS9).